Reading from the N-terminus, the 471-residue chain is uncharacterized protein (471 aa).

12 consecutive transmembrane segments (helical) span residues 48 to 68 (FISAALMLLNNTILCISFTIV), 85 to 105 (LSGVIIGLPTITALVLLYPML), 123 to 140 (YTMSCISCIIGHIMYALA), 145 to 165 (SVALILVSRIFTGVACTMFLY), 186 to 206 (VVNSVMATLGLTAGPFIGGLM), 223 to 243 (SGNWLMAFIWVGLFLFGFACF), 277 to 297 (FVGCLVIFVVAFSGFSAYFLL), 320 to 340 (GNFLSLAGIINVPLLLIFSYL), 349 to 369 (IILLGCCLNIVCMVIHITIHY), 379 to 399 (FIIYTLVFFGSSIANSPSVSL), 414 to 434 (VAVQISISLSDTVGAIFGGAF), and 440 to 460 (VVFFAVCLILNVMSVLALLII).

This sequence belongs to the major facilitator superfamily.

It localises to the golgi apparatus. The protein resides in the membrane. This is an uncharacterized protein from Schizosaccharomyces pombe (strain 972 / ATCC 24843) (Fission yeast).